We begin with the raw amino-acid sequence, 233 residues long: Demethylmenaquinone methyltransferase (233 aa).

Residues threonine 58, aspartate 79, and 106–107 (NA) each bind S-adenosyl-L-methionine.

This sequence belongs to the class I-like SAM-binding methyltransferase superfamily. MenG/UbiE family.

It carries out the reaction a 2-demethylmenaquinol + S-adenosyl-L-methionine = a menaquinol + S-adenosyl-L-homocysteine + H(+). The protein operates within quinol/quinone metabolism; menaquinone biosynthesis; menaquinol from 1,4-dihydroxy-2-naphthoate: step 2/2. In terms of biological role, methyltransferase required for the conversion of demethylmenaquinol (DMKH2) to menaquinol (MKH2). The protein is Demethylmenaquinone methyltransferase of Bacillus velezensis (strain DSM 23117 / BGSC 10A6 / LMG 26770 / FZB42) (Bacillus amyloliquefaciens subsp. plantarum).